The following is a 420-amino-acid chain: Serine hydroxymethyltransferase (420 aa).

(6S)-5,6,7,8-tetrahydrofolate is bound by residues Leu-121 and 125 to 127; that span reads GHL. Residue Lys-230 is modified to N6-(pyridoxal phosphate)lysine. (6S)-5,6,7,8-tetrahydrofolate-binding positions include Glu-246 and 354–356; that span reads SPF.

Belongs to the SHMT family. Homodimer. Pyridoxal 5'-phosphate is required as a cofactor.

It localises to the cytoplasm. The catalysed reaction is (6R)-5,10-methylene-5,6,7,8-tetrahydrofolate + glycine + H2O = (6S)-5,6,7,8-tetrahydrofolate + L-serine. The protein operates within one-carbon metabolism; tetrahydrofolate interconversion. Its pathway is amino-acid biosynthesis; glycine biosynthesis; glycine from L-serine: step 1/1. Its function is as follows. Catalyzes the reversible interconversion of serine and glycine with tetrahydrofolate (THF) serving as the one-carbon carrier. This reaction serves as the major source of one-carbon groups required for the biosynthesis of purines, thymidylate, methionine, and other important biomolecules. Also exhibits THF-independent aldolase activity toward beta-hydroxyamino acids, producing glycine and aldehydes, via a retro-aldol mechanism. The protein is Serine hydroxymethyltransferase of Rickettsia canadensis (strain McKiel).